Consider the following 644-residue polypeptide: Chaperone protein HscA (644 aa).

It belongs to the heat shock protein 70 family.

In terms of biological role, chaperone involved in the maturation of iron-sulfur cluster-containing proteins. Has a low intrinsic ATPase activity which is markedly stimulated by HscB. Involved in the maturation of IscU. This chain is Chaperone protein HscA, found in Yersinia pseudotuberculosis serotype I (strain IP32953).